Reading from the N-terminus, the 513-residue chain is GMP synthase [glutamine-hydrolyzing] (513 aa).

One can recognise a Glutamine amidotransferase type-1 domain in the interval 8–198; the sequence is MILVLDFGSQ…VFGVCDCEGK (191 aa). The Nucleophile role is filled by cysteine 85. Active-site residues include histidine 172 and glutamate 174. The region spanning 199–388 is the GMPS ATP-PPase domain; that stretch reads WSMENFIEIE…LGLPDDIVWR (190 aa). 226–232 lines the ATP pocket; it reads SGGVDSS.

Homodimer.

It carries out the reaction XMP + L-glutamine + ATP + H2O = GMP + L-glutamate + AMP + diphosphate + 2 H(+). Its pathway is purine metabolism; GMP biosynthesis; GMP from XMP (L-Gln route): step 1/1. In terms of biological role, catalyzes the synthesis of GMP from XMP. This is GMP synthase [glutamine-hydrolyzing] from Bacillus velezensis (strain DSM 23117 / BGSC 10A6 / LMG 26770 / FZB42) (Bacillus amyloliquefaciens subsp. plantarum).